A 201-amino-acid polypeptide reads, in one-letter code: Protease (201 aa).

Catalysis depends on residues histidine 55, aspartate 72, and cysteine 122.

This sequence belongs to the peptidase C5 family. As to quaternary structure, interacts with protease cofactor pVI-C; this interaction is necessary for protease activation.

Its subcellular location is the virion. It localises to the host nucleus. The enzyme catalyses Cleaves proteins of the adenovirus and its host cell at two consensus sites: -Yaa-Xaa-Gly-Gly-|-Xaa- and -Yaa-Xaa-Gly-Xaa-|-Gly- (in which Yaa is Met, Ile or Leu, and Xaa is any amino acid).. Its activity is regulated as follows. Requires DNA and protease cofactor for maximal activation. Inside nascent virions, becomes partially activated by binding to the viral DNA, allowing it to cleave the cofactor that binds to the protease and fully activates it. Actin, like the viral protease cofactor, seems to act as a cofactor in the cleavage of cytokeratin 18 and of actin itself. Functionally, cleaves viral precursor proteins (pTP, pIIIa, pVI, pVII, pVIII, and pX) inside newly assembled particles giving rise to mature virions. Protease complexed to its cofactor slides along the viral DNA to specifically locate and cleave the viral precursors. Mature virions have a weakened organization compared to the unmature virions, thereby facilitating subsequent uncoating. Without maturation, the particle lacks infectivity and is unable to uncoat. Late in adenovirus infection, in the cytoplasm, may participate in the cytoskeleton destruction. Cleaves host cell cytoskeletal keratins K7 and K18. The polypeptide is Protease (Ovis aries (Sheep)).